Consider the following 779-residue polypeptide: MRRSGTSLSRDLERKIHERLVSLKDTIQQTEIEEWPVSTRRAIQFVQERDMSLRRIKKPILEKVVEKVLDTLKAEVEEKLASSQDLVLVDSDMEEQSDSNLMEVKDTNVINKSITSLWSSPNLKEIDGEDEKKSVGQESITGSAKRKDRRSKTNGSKRQKAEANREPPSDISLSDIGGLDDCINELLELVAMPIKHPEVYQYTGIHPPRGVLLHGPPGCGKTMLANALANELGVPFISISAPSIVSGMSGESEKKVREVFEEAKSLAPCLMFIDEIDAVTPKRESAQREMERRIVAQFLTCMDELSFEKTDGKPVLVIGATNRPDSLDSALRRAGRFDREICLTVPSQDAREKILRTMAKGLKLSGDFDFRQLAKQTPGYVGADLKALTAAAGIIAIKRIFNEISPLNKLDLNSDPRFNELDSDMALDSNDSLPLDHSSIIQRYLNAHPDPLSPEELEPLAICPQDFIEALAKVQPSSKREGFATVPGVSWNNIGALKSIRVELQMAIVQPIKRPELYQSVGISAPTGVLLWGPPGCGKTLLAKAVANESKANFISIRGPELLNKYVGESERAVRQVFLRARASSPCVIFFDELDAMVPRRDDSLSEASSRVVNTLLTELDGLSDRSGVYVIAATNRPDIIDPAMLRPGRLDKTLLVDLPDAHERVEILKTLTKQTPLHEEVNLDVLGRDERCSNFSGADLAALVREAAVTALRSAVFADIASNEPEITQHSALEPIRVTNADFELAFKNIKPSVSDRDRQKYQRLAKRWSSASTNDAD.

S97 and S120 each carry phosphoserine. Basic and acidic residues predominate over residues 125–135 (EIDGEDEKKSV). The segment at 125–174 (EIDGEDEKKSVGQESITGSAKRKDRRSKTNGSKRQKAEANREPPSDISLS) is disordered. The span at 144–158 (AKRKDRRSKTNGSKR) shows a compositional bias: basic residues. A compositionally biased stretch (basic and acidic residues) spans 159–168 (QKAEANREPP). ATP contacts are provided by residues 215–222 (GPPGCGKT) and 533–540 (GPPGCGKT). Residues 759–779 (DRQKYQRLAKRWSSASTNDAD) form a disordered region.

This sequence belongs to the AAA ATPase family.

Its subcellular location is the nucleus. This is an uncharacterized protein from Schizosaccharomyces pombe (strain 972 / ATCC 24843) (Fission yeast).